We begin with the raw amino-acid sequence, 358 residues long: MRVLAAMSGGVDSSVAAARMVDAGHDVVGVHLALSTAPGTLRTGSRGCCSKEDASDARRVADVLGIPFYVWDFAEKFQADVIDEFLSAYARGETPNPCVTCNQKIKFSALSAKAVALGFDAVATGHYARLSGGRLRRAVDKDKDQSYVLAVLSAEQLRHAAFPIGDTPKPQIREEAARRGLAVAEKPDSHDICFIPSGNTRAFLGERIGVRRGAVVDADGTVLAEHDGVHGFTIGQRKGLGIAGPGPDGRPRYVTAIDADTATVRVGEASDLDVREMLGRAVVFTSGTAPSGPFECAVQVRAHGETADAVAELVGDELVVRLRAPLRGVAPGQTLALYRRDPDGDEVLGSATIAGTSR.

ATP-binding positions include 6–13 (AMSGGVDS) and leucine 32. The Nucleophile role is filled by cysteine 101. Cysteine 101 and cysteine 193 form a disulfide bridge. Glycine 125 serves as a coordination point for ATP. The segment at 143–145 (KDQ) is interaction with tRNA. Cysteine 193 serves as the catalytic Cysteine persulfide intermediate.

Belongs to the MnmA/TRMU family.

It is found in the cytoplasm. It catalyses the reaction S-sulfanyl-L-cysteinyl-[protein] + uridine(34) in tRNA + AH2 + ATP = 2-thiouridine(34) in tRNA + L-cysteinyl-[protein] + A + AMP + diphosphate + H(+). Catalyzes the 2-thiolation of uridine at the wobble position (U34) of tRNA, leading to the formation of s(2)U34. The sequence is that of tRNA-specific 2-thiouridylase MnmA from Mycolicibacterium paratuberculosis (strain ATCC BAA-968 / K-10) (Mycobacterium paratuberculosis).